A 315-amino-acid chain; its full sequence is Gamma-hemolysin component C (315 aa).

Residues 1 to 29 (MLKNKILTTTLSVSLLAPLANPLLENAKA) form the signal peptide.

Belongs to the aerolysin family. Toxicity requires sequential binding and synergistic association of a class S and a class F component which form heterooligomeric complexes. HlgC (class S) associates with HlgB (class F) thus forming an CB toxin.

Toxin that seems to act by forming pores in the membrane of the cell. Has a hemolytic and a leucotoxic activity. The sequence is that of Gamma-hemolysin component C (hlgC) from Staphylococcus aureus (strain COL).